The sequence spans 1145 residues: Protein sumv-2 (1145 aa).

Over residues 1–13 the composition is skewed to basic residues; sequence MKPGRKSLPKKNR. Disordered stretches follow at residues 1 to 310, 429 to 464, 999 to 1025, 1040 to 1059, and 1073 to 1145; these read MKPG…APPA, QSRTKLKGSSKEREETPAFDEESPIGGDEKRQQKAR, HSASSSAAPSPVGASGRRATVTGAGSE, QIAAPSISGPPPPAPSPRTE, and ITTG…ISLI. A compositionally biased stretch (polar residues) spans 14-34; it reads ASNITEKMPTTSTEAQSSSSK. 2 stretches are compositionally biased toward basic and acidic residues: residues 73–104 and 216–225; these read KTTEEVKSPRKSARKSELKKPEPEEKAKEPRK and VPEKKPKIED. The span at 226–248 shows a compositional bias: low complexity; the sequence is APTTSSPKKSTPTSAPPTRASAR. Basic and acidic residues predominate over residues 455-464; that stretch reads GDEKRQQKAR. Residues 999–1013 are compositionally biased toward low complexity; that stretch reads HSASSSAAPSPVGAS. The segment covering 1091 to 1102 has biased composition (basic and acidic residues); sequence VIERGDFRDHRP. Over residues 1121 to 1136 the composition is skewed to pro residues; sequence QQPPLPSPAPPPPRGP.

Its function is as follows. Influences the activity of genes involved in vulval development. The sequence is that of Protein sumv-2 from Caenorhabditis elegans.